The primary structure comprises 170 residues: Peptide deformylase (170 aa).

Fe cation contacts are provided by C91 and H133. E134 is a catalytic residue. Fe cation is bound at residue H137.

Belongs to the polypeptide deformylase family. Fe(2+) is required as a cofactor.

The catalysed reaction is N-terminal N-formyl-L-methionyl-[peptide] + H2O = N-terminal L-methionyl-[peptide] + formate. Removes the formyl group from the N-terminal Met of newly synthesized proteins. Requires at least a dipeptide for an efficient rate of reaction. N-terminal L-methionine is a prerequisite for activity but the enzyme has broad specificity at other positions. The chain is Peptide deformylase from Pectobacterium carotovorum subsp. carotovorum (strain PC1).